The chain runs to 114 residues: Large ribosomal subunit protein uL22 (114 aa).

It belongs to the universal ribosomal protein uL22 family. As to quaternary structure, part of the 50S ribosomal subunit.

This protein binds specifically to 23S rRNA; its binding is stimulated by other ribosomal proteins, e.g. L4, L17, and L20. It is important during the early stages of 50S assembly. It makes multiple contacts with different domains of the 23S rRNA in the assembled 50S subunit and ribosome. Functionally, the globular domain of the protein is located near the polypeptide exit tunnel on the outside of the subunit, while an extended beta-hairpin is found that lines the wall of the exit tunnel in the center of the 70S ribosome. This chain is Large ribosomal subunit protein uL22, found in Desulfosudis oleivorans (strain DSM 6200 / JCM 39069 / Hxd3) (Desulfococcus oleovorans).